The chain runs to 270 residues: 5-amino-6-(5-phospho-D-ribitylamino)uracil phosphatase YitU (270 aa).

The active-site Nucleophile is the D11. Mg(2+) is bound at residue D11. Residue L12 coordinates phosphate. D13 lines the Mg(2+) pocket. Residues 45-46 (TG) and K197 each bind phosphate. Position 220 (D220) interacts with Mg(2+). N223 provides a ligand contact to phosphate.

Belongs to the HAD-like hydrolase superfamily. Cof family. Requires Mg(2+) as cofactor.

It catalyses the reaction 5-amino-6-(5-phospho-D-ribitylamino)uracil + H2O = 5-amino-6-(D-ribitylamino)uracil + phosphate. It participates in cofactor biosynthesis; riboflavin biosynthesis; 5-amino-6-(D-ribitylamino)uracil from GTP: step 4/4. In terms of biological role, catalyzes the dephosphorylation of the riboflavin precursor 5-amino-6-(5-phospho-D-ribitylamino)uracil and of flavin mononucleotide (FMN) in vitro. The chain is 5-amino-6-(5-phospho-D-ribitylamino)uracil phosphatase YitU (yitU) from Bacillus subtilis (strain 168).